Reading from the N-terminus, the 484-residue chain is MKFIIKLFPEIMIKSESVRKRFVKILTGNIRNVLNKYDDTVAVVKHWDYIEVRSKNIENRTLLVELLGRIPGIHHFLEVEEKPFVTLHDIFEQTLSDVATQIENKTFCVRVKRKGKHDFSSLDAERYIGGGLNQAVASAKVQLSKPDVTVRIDIENDKMMLIKARHQGIGGYPIGTQEDVLSLISGGFDSGVSSYMLIRRGSRVHYCFFNLGGATHEIGVKQMAYHIWKRFSGSHKVRFVAINFEQVVAEILEKVDNGQMGVVLKRMMVRAASKVAQRFGIQAIVTGEALGQVSSQTLTNLRLIDEVAESLVLRPLITHDKEQIIAKAKEIGTEDIAKSMPEFCGAISKSPTVKAVKEKIEQEESYFDFSVLESAVQNAQYLDIRQIAEQTKKEVSEVDEITVLSANEVILDIRSPEEVDDKPLEISGQNIILMPFYKLSSHFAELDQSKNYVLYCERGVMSKLQALYLREKGFDNVKVLNKIS.

In terms of domain architecture, THUMP spans 61-165; that stretch reads TLLVELLGRI…NDKMMLIKAR (105 aa). Residues 183–184, lysine 265, glycine 287, and glutamine 296 each bind ATP; that span reads LI. Cysteine 344 and cysteine 456 are joined by a disulfide. Residues 404 to 484 form the Rhodanese domain; that stretch reads LSANEVILDI…DNVKVLNKIS (81 aa). Catalysis depends on cysteine 456, which acts as the Cysteine persulfide intermediate.

The protein belongs to the ThiI family.

The protein localises to the cytoplasm. It carries out the reaction [ThiI sulfur-carrier protein]-S-sulfanyl-L-cysteine + a uridine in tRNA + 2 reduced [2Fe-2S]-[ferredoxin] + ATP + H(+) = [ThiI sulfur-carrier protein]-L-cysteine + a 4-thiouridine in tRNA + 2 oxidized [2Fe-2S]-[ferredoxin] + AMP + diphosphate. It catalyses the reaction [ThiS sulfur-carrier protein]-C-terminal Gly-Gly-AMP + S-sulfanyl-L-cysteinyl-[cysteine desulfurase] + AH2 = [ThiS sulfur-carrier protein]-C-terminal-Gly-aminoethanethioate + L-cysteinyl-[cysteine desulfurase] + A + AMP + 2 H(+). The protein operates within cofactor biosynthesis; thiamine diphosphate biosynthesis. Functionally, catalyzes the ATP-dependent transfer of a sulfur to tRNA to produce 4-thiouridine in position 8 of tRNAs, which functions as a near-UV photosensor. Also catalyzes the transfer of sulfur to the sulfur carrier protein ThiS, forming ThiS-thiocarboxylate. This is a step in the synthesis of thiazole, in the thiamine biosynthesis pathway. The sulfur is donated as persulfide by IscS. The sequence is that of tRNA sulfurtransferase from Histophilus somni (strain 2336) (Haemophilus somnus).